An 887-amino-acid chain; its full sequence is Probable dual specificity protein kinase madd-3 (887 aa).

Disordered stretches follow at residues 77–147, 163–299, 313–333, 347–475, and 504–533; these read PIKS…ISAA, AQPP…PKAL, LPQS…STGG, TTIC…KSAA, and RKPS…QHQD. The span at 108–118 shows a compositional bias: low complexity; that stretch reads PTQNPVQLPLP. Positions 121–130 are enriched in basic and acidic residues; it reads VSEKPGDKKS. Polar residues predominate over residues 177 to 192; that stretch reads SETNSGSGPVSKQVSG. Low complexity predominate over residues 217 to 241; sequence SSASTRAKAASAVAPEANPAPVPTA. Polar residues-rich tracts occupy residues 314–332 and 356–366; these read PQSS…TSTG and NVPSTSQPQQG. Residues 367–377 show a composition bias toward basic and acidic residues; sequence DNEKRLIEKKL. Low complexity predominate over residues 407 to 419; sequence LSSNLTTTNNNNN. Positions 439–462 are enriched in polar residues; the sequence is FSTQAGSGNATTVDDPASTTTSKE. The region spanning 551–863 is the Protein kinase domain; it reads FTIYDTLGEG…LPEALQHRYF (313 aa). ATP contacts are provided by residues 557 to 565 and K580; that span reads LGEGTFGKV. The active-site Proton acceptor is D677.

Belongs to the protein kinase superfamily. CMGC Ser/Thr protein kinase family. Lammer subfamily. In terms of tissue distribution, expressed in body wall, vulval and anal depressor muscles.

It localises to the cytoplasm. The protein resides in the nucleus. In terms of biological role, probable dual specificity kinase acting on both serine/threonine and tyrosine-containing substrates. Negatively regulates p38 MAPK signaling to allow for the plasma membrane of body wall muscle cells to form projections, also called muscle arms, that extend and connect the body wall muscles to target motor neurons. Negative regulation of p38 MAPK signaling may in turn modulate the trafficking of the muscle specific receptor eva-1 to the lysosome, to ensure proper display of the eva-1 receptor on the plasma membrane of muscle cells and allow for muscle arm extension towards guidance cues. This chain is Probable dual specificity protein kinase madd-3, found in Caenorhabditis elegans.